A 476-amino-acid polypeptide reads, in one-letter code: MADMSNGEQGCGSPLELFHSIAAQGELVRDLKARNAAKDEIDSAVKMLLSLKTSYKAATGEDYKVDCPPGDPAPESGEGLDATEADEDFVDPWTVQTSSAKGIDYDKLIVRFGSSKIDKELVNRIERATGQRPHRFLRRGIFFSHRDMHQILDAYENKKPFYLYTGRGPSSEAMHVGHLIPFIFTKWLQDVFNVPLVIQMTDDEKYLWKDLTLDQAYGYAVENAKDIIACGFDINKTFIFSDLDYMGMSPGFYKNVVKIQKHVTFNQVKGIFGFTDSDCIGKISFPAIQAAPSFSNSFPQIFRDRTDVQCLIPCAIDQDPYFRMTRDVAPRIGYPKPALLHSTFFPALQGAQTKMSASDPNSSIFLTDTAKQIKTKVNKHAFSGGRDTVEEHRQFGGNCDVDVSFMYLTFFLEDDDKLEQIRRDYTSGAMLTGELKKELIEVLQPLIAEHQARRKEVTDEIVKEFMTPRKLSYDFQ.

The dispensable to the catalytic activity stretch occupies residues 1–117; sequence MADMSNGEQG…LIVRFGSSKI (117 aa). The WHEP-TRS domain occupies 13–69; that stretch reads SPLELFHSIAAQGELVRDLKARNAAKDEIDSAVKMLLSLKTSYKAATGEDYKVDCPP. Residues 63 to 83 are disordered; it reads YKVDCPPGDPAPESGEGLDAT. At K159 the chain carries N6-succinyllysine. A 'HIGH' region motif is present at residues 169-178; sequence PSSEAMHVGH. The 'KMSKS' region signature appears at 354–358; sequence KMSAS. At S356 the chain carries Phosphoserine.

Belongs to the class-I aminoacyl-tRNA synthetase family. In terms of assembly, homodimer. Interacts with oxidized form of GAPDH. In terms of processing, proteolytic cleavage generates 2 forms; T1-TrpRS and T2-TrpRS.

It is found in the cytoplasm. It carries out the reaction tRNA(Trp) + L-tryptophan + ATP = L-tryptophyl-tRNA(Trp) + AMP + diphosphate + H(+). T1-TrpRS has aminoacylation activity while T2-TrpRS lacks it. T1-TrpRS and T2-TrpRS possess angiostatic activity. T2-TrpRS inhibits fluid shear stress-activated responses of endothelial cells. Regulates ERK, Akt, and eNOS activation pathways that are associated with angiogenesis, cytoskeletal reorganization and shear stress-responsive gene expression. The polypeptide is Tryptophan--tRNA ligase, cytoplasmic (WARS1) (Bos taurus (Bovine)).